The chain runs to 310 residues: Iron ABC transporter substrate-binding lipoprotein MtsA (310 aa).

Positions 1-20 (MGKKMSLILGAFLSVFLLVA) are cleaved as a signal peptide. C21 carries N-palmitoyl cysteine lipidation. Residue C21 is the site of S-diacylglycerol cysteine attachment. Fe(2+) contacts are provided by H68, H140, E206, and D281.

Belongs to the bacterial solute-binding protein 9 family. Lipoprotein receptor antigen (Lrai) subfamily.

The protein resides in the cell membrane. In terms of biological role, part of the ATP-binding cassette (ABC) transport system MtsABC involved in iron import. Binds iron with high affinity and specificity and delivers it to the membrane permease for translocation into the cytoplasm. Has low affinity for Zn(2+) and Cu(2+). The sequence is that of Iron ABC transporter substrate-binding lipoprotein MtsA (mtsA) from Streptococcus pyogenes serotype M6 (strain ATCC BAA-946 / MGAS10394).